A 195-amino-acid chain; its full sequence is Pyridoxal 5'-phosphate synthase subunit PdxT (195 aa).

An L-glutamine-binding site is contributed by 53–55 (GES). Cys-82 functions as the Nucleophile in the catalytic mechanism. Residues Arg-108 and 134 to 135 (IR) each bind L-glutamine. Residues His-173 and Glu-175 each act as charge relay system in the active site.

It belongs to the glutaminase PdxT/SNO family. As to quaternary structure, in the presence of PdxS, forms a dodecamer of heterodimers. Only shows activity in the heterodimer.

It catalyses the reaction aldehydo-D-ribose 5-phosphate + D-glyceraldehyde 3-phosphate + L-glutamine = pyridoxal 5'-phosphate + L-glutamate + phosphate + 3 H2O + H(+). The enzyme catalyses L-glutamine + H2O = L-glutamate + NH4(+). Its pathway is cofactor biosynthesis; pyridoxal 5'-phosphate biosynthesis. In terms of biological role, catalyzes the hydrolysis of glutamine to glutamate and ammonia as part of the biosynthesis of pyridoxal 5'-phosphate. The resulting ammonia molecule is channeled to the active site of PdxS. The protein is Pyridoxal 5'-phosphate synthase subunit PdxT of Methanobrevibacter smithii (strain ATCC 35061 / DSM 861 / OCM 144 / PS).